We begin with the raw amino-acid sequence, 55 residues long: Ferredoxin (55 aa).

4Fe-4S ferredoxin-type domains lie at 2–27 and 28–55; these read YKITDGCINCGACEPECPVEAISESD and AVRVIDADKCIDCGACANTCPVDAIVEG. The [4Fe-4S] cluster site is built by Cys-8, Cys-11, Cys-14, Cys-18, Cys-37, Cys-40, Cys-43, and Cys-47.

Requires [4Fe-4S] cluster as cofactor.

In terms of biological role, ferredoxins are iron-sulfur proteins that transfer electrons in a wide variety of metabolic reactions. This is Ferredoxin from Clostridium sp. (strain M-E).